Consider the following 382-residue polypeptide: Galactokinase (382 aa).

Residue 34–37 (EHTD) participates in substrate binding. 124 to 130 (GAGLSSS) contributes to the ATP binding site. Mg(2+) contacts are provided by S130 and E162. The active-site Proton acceptor is the D174. Y223 lines the substrate pocket.

It belongs to the GHMP kinase family. GalK subfamily.

It is found in the cytoplasm. It carries out the reaction alpha-D-galactose + ATP = alpha-D-galactose 1-phosphate + ADP + H(+). The protein operates within carbohydrate metabolism; galactose metabolism. In terms of biological role, catalyzes the transfer of the gamma-phosphate of ATP to D-galactose to form alpha-D-galactose-1-phosphate (Gal-1-P). This Shigella flexneri serotype 5b (strain 8401) protein is Galactokinase.